Here is a 389-residue protein sequence, read N- to C-terminus: MINYVTAGESHGPQLTGVLTGIPAGLQLDIDAINTGLAARQGGFGRGNRQQIEHDTVQIIGGVRHGVTLGSPIALTIMNRDHAHWAAIMDPVSPATATNTLRQVTRPRPGHADLVGGMKYGHRDLRNVLERSSARETAMRVAIGQICKQLLAQLDIHLVGYVQQIGPKQVTADLTLSVDQLQAQIAQNDLRLPDAALVPEIHELITATKKAGDTLGGVIRVVAENVPAGLGSYTNWDTKLDGQLAAAVMGVNAMKGVEIGDGFAAASHYGSQVMDEISWDEHAGWSRLTNHLGGFEGGMTNGMPIVVKAAMKPIPTLYKPLQSVDIATKVSQKASVERSDTTAIVPASIVVESVVAIELTRALTATFDGSNLARLQQTVTAYREELRQY.

NADP(+) is bound by residues Arg40 and Arg46. Residues 131 to 133 (RSS), 252 to 253 (NA), Gly297, 312 to 316 (KPIPT), and Arg338 each bind FMN.

The protein belongs to the chorismate synthase family. In terms of assembly, homotetramer. FMNH2 is required as a cofactor.

It catalyses the reaction 5-O-(1-carboxyvinyl)-3-phosphoshikimate = chorismate + phosphate. It functions in the pathway metabolic intermediate biosynthesis; chorismate biosynthesis; chorismate from D-erythrose 4-phosphate and phosphoenolpyruvate: step 7/7. Catalyzes the anti-1,4-elimination of the C-3 phosphate and the C-6 proR hydrogen from 5-enolpyruvylshikimate-3-phosphate (EPSP) to yield chorismate, which is the branch point compound that serves as the starting substrate for the three terminal pathways of aromatic amino acid biosynthesis. This reaction introduces a second double bond into the aromatic ring system. This Lactiplantibacillus plantarum (strain ATCC BAA-793 / NCIMB 8826 / WCFS1) (Lactobacillus plantarum) protein is Chorismate synthase.